We begin with the raw amino-acid sequence, 386 residues long: Chaperone protein DnaJ (386 aa).

The J domain maps to 6–71 (DYYEILGVDR…QKRARYDQFG (66 aa)). Residues 144 to 226 (GTEKEVTVSR…CGGKGRVRKH (83 aa)) form a CR-type zinc finger. The Zn(2+) site is built by Cys-157, Cys-160, Cys-174, Cys-177, Cys-200, Cys-203, Cys-214, and Cys-217. 4 CXXCXGXG motif repeats span residues 157 to 164 (CPTCSGSG), 174 to 181 (CRQCNGTG), 200 to 207 (CDVCHGEG), and 214 to 221 (CETCGGKG).

This sequence belongs to the DnaJ family. As to quaternary structure, homodimer. Zn(2+) serves as cofactor.

It is found in the cytoplasm. In terms of biological role, participates actively in the response to hyperosmotic and heat shock by preventing the aggregation of stress-denatured proteins and by disaggregating proteins, also in an autonomous, DnaK-independent fashion. Unfolded proteins bind initially to DnaJ; upon interaction with the DnaJ-bound protein, DnaK hydrolyzes its bound ATP, resulting in the formation of a stable complex. GrpE releases ADP from DnaK; ATP binding to DnaK triggers the release of the substrate protein, thus completing the reaction cycle. Several rounds of ATP-dependent interactions between DnaJ, DnaK and GrpE are required for fully efficient folding. Also involved, together with DnaK and GrpE, in the DNA replication of plasmids through activation of initiation proteins. The sequence is that of Chaperone protein DnaJ from Acetivibrio thermocellus (strain ATCC 27405 / DSM 1237 / JCM 9322 / NBRC 103400 / NCIMB 10682 / NRRL B-4536 / VPI 7372) (Clostridium thermocellum).